The sequence spans 417 residues: Phosphoribosylamine--glycine ligase (417 aa).

An ATP-grasp domain is found at 108–307; the sequence is KRIMDEAGVP…LSTLLFAAAT (200 aa). 134 to 188 contributes to the ATP binding site; the sequence is LDEFGAPYVVKADGLAAGKGVIVTEDRAAALAHAARYLTHGSVLVEEFLDGEEVS. Residues Glu-277 and Asn-279 each contribute to the Mg(2+) site.

The protein belongs to the GARS family. Mg(2+) serves as cofactor. The cofactor is Mn(2+).

It carries out the reaction 5-phospho-beta-D-ribosylamine + glycine + ATP = N(1)-(5-phospho-beta-D-ribosyl)glycinamide + ADP + phosphate + H(+). It participates in purine metabolism; IMP biosynthesis via de novo pathway; N(1)-(5-phospho-D-ribosyl)glycinamide from 5-phospho-alpha-D-ribose 1-diphosphate: step 2/2. This chain is Phosphoribosylamine--glycine ligase, found in Leifsonia xyli subsp. xyli (strain CTCB07).